Reading from the N-terminus, the 280-residue chain is Undecaprenyl-diphosphatase (280 aa).

The next 8 membrane-spanning stretches (helical) occupy residues 1-21 (MTIL…FLPV), 41-61 (FVRA…LVLY), 87-107 (FDLY…GFLF), 115-135 (LGSV…MLFV), 147-167 (ITYP…FLPG), 186-206 (KAAA…ATLL), 225-245 (IVLL…IKFF), and 260-280 (YRIL…SLAV).

The protein belongs to the UppP family.

It localises to the cell inner membrane. It carries out the reaction di-trans,octa-cis-undecaprenyl diphosphate + H2O = di-trans,octa-cis-undecaprenyl phosphate + phosphate + H(+). In terms of biological role, catalyzes the dephosphorylation of undecaprenyl diphosphate (UPP). Confers resistance to bacitracin. This Porphyromonas gingivalis (strain ATCC 33277 / DSM 20709 / CIP 103683 / JCM 12257 / NCTC 11834 / 2561) protein is Undecaprenyl-diphosphatase.